The following is a 213-amino-acid chain: Orotate phosphoribosyltransferase (213 aa).

Residue Lys-26 participates in 5-phospho-alpha-D-ribose 1-diphosphate binding. 34–35 lines the orotate pocket; the sequence is FF. 5-phospho-alpha-D-ribose 1-diphosphate is bound by residues 72–73, Arg-99, Lys-100, Lys-103, His-105, and 124–132; these read YK and DDVITAGTA. Positions 128 and 156 each coordinate orotate.

It belongs to the purine/pyrimidine phosphoribosyltransferase family. PyrE subfamily. In terms of assembly, homodimer. Mg(2+) serves as cofactor.

It catalyses the reaction orotidine 5'-phosphate + diphosphate = orotate + 5-phospho-alpha-D-ribose 1-diphosphate. Its pathway is pyrimidine metabolism; UMP biosynthesis via de novo pathway; UMP from orotate: step 1/2. Its function is as follows. Catalyzes the transfer of a ribosyl phosphate group from 5-phosphoribose 1-diphosphate to orotate, leading to the formation of orotidine monophosphate (OMP). The protein is Orotate phosphoribosyltransferase of Actinobacillus pleuropneumoniae serotype 5b (strain L20).